The chain runs to 1103 residues: Retinal guanylyl cyclase 1 (1103 aa).

The signal sequence occupies residues 1–51 (MTACARRAGGLPDPGLCGPAWWAPSLPRLPRALPRLPLLLLLLLLQPPALS). The Extracellular segment spans residues 52–462 (AVFTVGVLGP…PNNICGGGLE (411 aa)). A glycan (N-linked (GlcNAc...) asparagine) is linked at asparagine 297. A helical membrane pass occupies residues 463–487 (PGLVFLGFLLVVGMGLAGAFLAHYV). Topologically, residues 488–1103 (RHRLLHMQMV…LEKARPGQFS (616 aa)) are cytoplasmic. Residues 525–808 (QGSRSSLGAR…DHTFDLFKNI (284 aa)) form the Protein kinase domain. One can recognise a Guanylate cyclase domain in the interval 880-1010 (TLYFSDIVGF…DTVNTASRME (131 aa)). The disordered stretch occupies residues 1065 to 1103 (PIPKPPDLQPGSSNHGISLQEIPPERRRKLEKARPGQFS).

Belongs to the adenylyl cyclase class-4/guanylyl cyclase family. In terms of assembly, homodimer; requires homodimerization for guanylyl cyclase activity. Interacts with RD3; promotes the exit of GUCY2D from the endoplasmic reticulum and its trafficking to the photoreceptor outer segments. Interaction with RD3 negatively regulates guanylate cyclase activity. In terms of tissue distribution, retina.

Its subcellular location is the photoreceptor outer segment membrane. The protein resides in the endoplasmic reticulum membrane. The catalysed reaction is GTP = 3',5'-cyclic GMP + diphosphate. Its activity is regulated as follows. Activated by GUCA1A when free calcium ions concentration is low, and inhibited by GUCA1A when free calcium ions concentration is high. Negatively regulated by RD3; inhibits the basal and GUCA1A-stimulated guanylate cyclase activity. In terms of biological role, catalyzes the synthesis of cyclic GMP (cGMP) in rods and cones of photoreceptors. Plays an essential role in phototransduction, by mediating cGMP replenishment. May also participate in the trafficking of membrane-asociated proteins to the photoreceptor outer segment membrane. This is Retinal guanylyl cyclase 1 (GUCY2D) from Homo sapiens (Human).